We begin with the raw amino-acid sequence, 490 residues long: Betaine aldehyde dehydrogenase (490 aa).

3 residues coordinate K(+): T26, I27, and D93. Position 150-152 (150-152 (GAW)) interacts with NAD(+). K162 (charge relay system) is an active-site residue. Residue 176-179 (KPSE) participates in NAD(+) binding. V180 contacts K(+). 230–233 (GVAS) contributes to the NAD(+) binding site. A K(+)-binding site is contributed by L246. Residue E252 is the Proton acceptor of the active site. NAD(+) is bound by residues G254, C286, and E387. Catalysis depends on C286, which acts as the Nucleophile. C286 carries the cysteine sulfenic acid (-SOH) modification. K(+)-binding residues include K457 and G460. The active-site Charge relay system is E464.

This sequence belongs to the aldehyde dehydrogenase family. As to quaternary structure, dimer of dimers. Requires K(+) as cofactor.

The catalysed reaction is betaine aldehyde + NAD(+) + H2O = glycine betaine + NADH + 2 H(+). It functions in the pathway amine and polyamine biosynthesis; betaine biosynthesis via choline pathway; betaine from betaine aldehyde: step 1/1. In terms of biological role, involved in the biosynthesis of the osmoprotectant glycine betaine. Catalyzes the irreversible oxidation of betaine aldehyde to the corresponding acid. This Escherichia coli O9:H4 (strain HS) protein is Betaine aldehyde dehydrogenase.